Consider the following 227-residue polypeptide: Gamma-glutamyl-hercynylcysteine sulfoxide hydrolase (227 aa).

Residue Cys2 is the Nucleophile of the active site. One can recognise a Glutamine amidotransferase type-2 domain in the interval 2–227 (CRHVAWLGAP…RDAHVVVTPL (226 aa)).

The enzyme catalyses gamma-L-glutamyl-hercynylcysteine S-oxide + H2O = S-(hercyn-2-yl)-L-cysteine S-oxide + L-glutamate. It functions in the pathway amino-acid biosynthesis; ergothioneine biosynthesis. In terms of biological role, catalyzes the hydrolysis of the gamma-glutamyl amide bond of hercynyl-gamma-L-glutamyl-L-cysteine sulfoxide to produce hercynylcysteine sulfoxide, a step in the biosynthesis pathway of ergothioneine. The chain is Gamma-glutamyl-hercynylcysteine sulfoxide hydrolase from Mycolicibacterium smegmatis (strain ATCC 700084 / mc(2)155) (Mycobacterium smegmatis).